Reading from the N-terminus, the 88-residue chain is Small ribosomal subunit protein bS20 (88 aa).

The protein belongs to the bacterial ribosomal protein bS20 family.

Its function is as follows. Binds directly to 16S ribosomal RNA. The polypeptide is Small ribosomal subunit protein bS20 (Bartonella henselae (strain ATCC 49882 / DSM 28221 / CCUG 30454 / Houston 1) (Rochalimaea henselae)).